The chain runs to 94 residues: MIRSELIQKIADENPHLYQRDVERIVNTIFEEVTGAMARGDRVELRGFGAFSVKKRDARIGRNPRTGETVHVEEKHVPFFKTGKLLRDRLNGKS.

Belongs to the bacterial histone-like protein family. In terms of assembly, heterodimer of an alpha and a beta chain.

Functionally, this protein is one of the two subunits of integration host factor, a specific DNA-binding protein that functions in genetic recombination as well as in transcriptional and translational control. The polypeptide is Integration host factor subunit beta (Roseobacter denitrificans (strain ATCC 33942 / OCh 114) (Erythrobacter sp. (strain OCh 114))).